A 2198-amino-acid chain; its full sequence is RNA-directed RNA polymerase L (2198 aa).

The endonuclease stretch occupies residues 26–284 (KEALLSQVEV…AHSDSLAPEC (259 aa)). Glutamate 51, aspartate 89, and glutamate 102 together coordinate Mn(2+). Residue lysine 115 is part of the active site. Residues 1161–1359 (CDMKMAVNNG…FLSSKFNKFV (199 aa)) enclose the RdRp catalytic domain. Residue aspartate 1319 participates in Mg(2+) binding.

The protein belongs to the Bunyavirales RNA polymerase family. Homomultimer; the oligomeric structure is essential for the polymerase activity. Interacts with nucleoprotein N. Interacts with protein Z; this interaction inhibits viral transcription and replication, Z partially blocks the product exit tunnel for the releasing nascent RNA product. It depends on Mn(2+) as a cofactor. The cofactor is Mg(2+).

It localises to the virion. The protein resides in the host cytoplasm. It catalyses the reaction RNA(n) + a ribonucleoside 5'-triphosphate = RNA(n+1) + diphosphate. Its function is as follows. RNA-dependent RNA polymerase, which is responsible for the replication and transcription of the viral RNA genome using antigenomic RNA as an intermediate. During transcription, synthesizes subgenomic RNAs and assures their capping by a cap-snatching mechanism, which involves the endonuclease activity cleaving the host capped pre-mRNAs. These short capped RNAs are then used as primers for viral transcription. The 3'-end of subgenomic mRNAs molecules are heterogeneous and not polyadenylated. The replicase function is to direct synthesis of antigenomic and genomic RNA which are encapsidated and non capped. As a consequence of the use of the same enzyme for both transcription and replication, these mechanisms need to be well coordinated. These processes may be regulated by proteins N and Z in a dose-dependent manner. Z protein inhibits the viral polymerase L und thus the viral transcription and RNA synthesis. The polypeptide is RNA-directed RNA polymerase L (Homo sapiens (Human)).